The chain runs to 603 residues: Geraniol synthase Tps-5031G8, chloroplastic (603 aa).

The N-terminal 35 residues, Met-1 to Ser-35, are a transit peptide targeting the chloroplast. Residues Arg-319, Asp-356, Asp-360, Arg-497, and Asp-500 each coordinate (2E)-geranyl diphosphate. Asp-356 and Asp-360 together coordinate Mg(2+). Residues Asp-356–Asp-360 carry the DDXXD motif motif. Mg(2+) is bound by residues Asp-500, Thr-504, and Glu-508.

Belongs to the terpene synthase family. Tpsb subfamily. As to quaternary structure, monomer. Mg(2+) is required as a cofactor. Requires Mn(2+) as cofactor.

It is found in the plastid. The protein localises to the chloroplast. It carries out the reaction (2E)-geranyl diphosphate + H2O = (2E)-geraniol + diphosphate. The protein operates within secondary metabolite biosynthesis; terpenoid biosynthesis. Its function is as follows. Monoterpene synthase (mono-TPS) involved in the biosynthesis of monoterpenes natural products. Catalyzes the conversion of (2E)-geranyl diphosphate (GPP) into geraniol. In Perilla frutescens var. hirtella (Perilla citriodora), this protein is Geraniol synthase Tps-5031G8, chloroplastic.